The sequence spans 396 residues: Elongation factor Tu (396 aa).

Positions 10–206 (KPHVNVGTIG…ALDTYIPTPE (197 aa)) constitute a tr-type G domain. Residues 19–26 (GHVDHGKT) are G1. Residue 19-26 (GHVDHGKT) coordinates GTP. T26 is a Mg(2+) binding site. The tract at residues 60 to 64 (GITIN) is G2. The tract at residues 81 to 84 (DCPG) is G3. GTP contacts are provided by residues 81–85 (DCPGH) and 136–139 (NKCD). Residues 136 to 139 (NKCD) are G4. The interval 174–176 (SAK) is G5.

The protein belongs to the TRAFAC class translation factor GTPase superfamily. Classic translation factor GTPase family. EF-Tu/EF-1A subfamily. In terms of assembly, monomer.

Its subcellular location is the cytoplasm. The catalysed reaction is GTP + H2O = GDP + phosphate + H(+). GTP hydrolase that promotes the GTP-dependent binding of aminoacyl-tRNA to the A-site of ribosomes during protein biosynthesis. The chain is Elongation factor Tu from Paraburkholderia xenovorans (strain LB400).